The chain runs to 345 residues: tRNA-specific 2-thiouridylase MnmA 1 (345 aa).

ATP is bound by residues 9-16 (GMSGGIDS) and Leu-35. Cys-96 acts as the Nucleophile in catalysis. Cysteines 96 and 191 form a disulfide. Residue Gly-120 participates in ATP binding. Residues 138–140 (KDQ) form an interaction with tRNA region. Cys-191 serves as the catalytic Cysteine persulfide intermediate. The interval 293 to 294 (RY) is interaction with tRNA.

This sequence belongs to the MnmA/TRMU family.

Its subcellular location is the cytoplasm. It carries out the reaction S-sulfanyl-L-cysteinyl-[protein] + uridine(34) in tRNA + AH2 + ATP = 2-thiouridine(34) in tRNA + L-cysteinyl-[protein] + A + AMP + diphosphate + H(+). In terms of biological role, catalyzes the 2-thiolation of uridine at the wobble position (U34) of tRNA, leading to the formation of s(2)U34. In Aliarcobacter butzleri (strain RM4018) (Arcobacter butzleri), this protein is tRNA-specific 2-thiouridylase MnmA 1.